A 259-amino-acid chain; its full sequence is HTH-type quorum sensing-dependent transcriptional regulator VjbR (259 aa).

Positions 76–179 (KNYFAIDPVF…AGIIHGTVCG (104 aa)) are C12-HSL binding. One can recognise an HTH luxR-type domain in the interval 183–248 (ANSVASLLTP…SAVATALSLG (66 aa)). Positions 207–226 (DGEIAEILSIARWTVVTYLQ) form a DNA-binding region, H-T-H motif.

In terms of biological role, transcriptional regulator involved in the global control of Brucella gene expression. Mediates the effects of the quorum sensing autoinducer C12-HSL (N-dodecanoyl-homoserine lactone) on a large and diverse number of genes. The protein is HTH-type quorum sensing-dependent transcriptional regulator VjbR (vjbR) of Brucella suis biovar 1 (strain 1330).